The primary structure comprises 478 residues: ATP synthase subunit beta (478 aa).

An ATP-binding site is contributed by 164–171 (GGAGVGKT).

The protein belongs to the ATPase alpha/beta chains family. In terms of assembly, F-type ATPases have 2 components, CF(1) - the catalytic core - and CF(0) - the membrane proton channel. CF(1) has five subunits: alpha(3), beta(3), gamma(1), delta(1), epsilon(1). CF(0) has three main subunits: a(1), b(2) and c(9-12). The alpha and beta chains form an alternating ring which encloses part of the gamma chain. CF(1) is attached to CF(0) by a central stalk formed by the gamma and epsilon chains, while a peripheral stalk is formed by the delta and b chains.

Its subcellular location is the cell membrane. The enzyme catalyses ATP + H2O + 4 H(+)(in) = ADP + phosphate + 5 H(+)(out). Its function is as follows. Produces ATP from ADP in the presence of a proton gradient across the membrane. The catalytic sites are hosted primarily by the beta subunits. The polypeptide is ATP synthase subunit beta (Streptomyces avermitilis (strain ATCC 31267 / DSM 46492 / JCM 5070 / NBRC 14893 / NCIMB 12804 / NRRL 8165 / MA-4680)).